The chain runs to 44 residues: Cytochrome b559 subunit beta (44 aa).

Residues 17 to 41 traverse the membrane as a helical segment; the sequence is VRWLAVHTLAVPSVFFVGAIAAMQF. Heme contacts are provided by Arg18 and His23.

This sequence belongs to the PsbE/PsbF family. As to quaternary structure, heterodimer of an alpha subunit and a beta subunit. PSII is composed of 1 copy each of membrane proteins PsbA, PsbB, PsbC, PsbD, PsbE, PsbF, PsbH, PsbI, PsbJ, PsbK, PsbL, PsbM, PsbT, PsbX, PsbY, PsbZ, Psb30/Ycf12, peripheral proteins PsbO, CyanoQ (PsbQ), PsbU, PsbV and a large number of cofactors. It forms dimeric complexes. Heme b serves as cofactor.

The protein localises to the cellular thylakoid membrane. Its function is as follows. This b-type cytochrome is tightly associated with the reaction center of photosystem II (PSII). PSII is a light-driven water:plastoquinone oxidoreductase that uses light energy to abstract electrons from H(2)O, generating O(2) and a proton gradient subsequently used for ATP formation. It consists of a core antenna complex that captures photons, and an electron transfer chain that converts photonic excitation into a charge separation. The chain is Cytochrome b559 subunit beta from Synechocystis sp. (strain ATCC 27184 / PCC 6803 / Kazusa).